Here is a 432-residue protein sequence, read N- to C-terminus: Histidine--tRNA ligase (432 aa).

This sequence belongs to the class-II aminoacyl-tRNA synthetase family.

The protein localises to the cytoplasm. The catalysed reaction is tRNA(His) + L-histidine + ATP = L-histidyl-tRNA(His) + AMP + diphosphate + H(+). The polypeptide is Histidine--tRNA ligase (Pyrococcus furiosus (strain ATCC 43587 / DSM 3638 / JCM 8422 / Vc1)).